Here is a 518-residue protein sequence, read N- to C-terminus: Putative succinate-semialdehyde dehydrogenase [NADP(+)] 2 (518 aa).

NADP(+)-binding positions include 157–158 (WN), 181–184 (KPDS), and 232–233 (GS). Residue E254 is the Proton acceptor of the active site. Position 255 (L255) interacts with NADP(+). Catalysis depends on C288, which acts as the Nucleophile. E386 lines the NADP(+) pocket.

The protein belongs to the aldehyde dehydrogenase family.

It catalyses the reaction succinate semialdehyde + NADP(+) + H2O = succinate + NADPH + 2 H(+). Its function is as follows. Catalyzes the NADP(+)-dependent oxidation of succinate semialdehyde to succinate. Although it has succinate semialdehyde dehydrogenase activity, is likely to act physiologically on a different aldehyde(s). The protein is Putative succinate-semialdehyde dehydrogenase [NADP(+)] 2 (gabD2) of Mycobacterium bovis (strain ATCC BAA-935 / AF2122/97).